The following is a 443-amino-acid chain: ATP-dependent protease ATPase subunit HslU (443 aa).

ATP-binding positions include Ile18 and 60-65 (GVGKTE). A disordered region spans residues 142 to 162 (LGFEASPSEESNATRQKFRKK). Residues Asp256, Glu321, and Arg393 each coordinate ATP.

It belongs to the ClpX chaperone family. HslU subfamily. A double ring-shaped homohexamer of HslV is capped on each side by a ring-shaped HslU homohexamer. The assembly of the HslU/HslV complex is dependent on binding of ATP.

The protein resides in the cytoplasm. In terms of biological role, ATPase subunit of a proteasome-like degradation complex; this subunit has chaperone activity. The binding of ATP and its subsequent hydrolysis by HslU are essential for unfolding of protein substrates subsequently hydrolyzed by HslV. HslU recognizes the N-terminal part of its protein substrates and unfolds these before they are guided to HslV for hydrolysis. This is ATP-dependent protease ATPase subunit HslU from Nitrosomonas europaea (strain ATCC 19718 / CIP 103999 / KCTC 2705 / NBRC 14298).